Reading from the N-terminus, the 311-residue chain is Aspartate carbamoyltransferase catalytic subunit (311 aa).

2 residues coordinate carbamoyl phosphate: arginine 59 and threonine 60. Residue lysine 87 coordinates L-aspartate. Residues arginine 109, histidine 139, and glutamine 142 each coordinate carbamoyl phosphate. Arginine 172 and arginine 224 together coordinate L-aspartate. Residues alanine 265 and proline 266 each coordinate carbamoyl phosphate.

The protein belongs to the aspartate/ornithine carbamoyltransferase superfamily. ATCase family. In terms of assembly, heterododecamer (2C3:3R2) of six catalytic PyrB chains organized as two trimers (C3), and six regulatory PyrI chains organized as three dimers (R2).

The enzyme catalyses carbamoyl phosphate + L-aspartate = N-carbamoyl-L-aspartate + phosphate + H(+). It functions in the pathway pyrimidine metabolism; UMP biosynthesis via de novo pathway; (S)-dihydroorotate from bicarbonate: step 2/3. In terms of biological role, catalyzes the condensation of carbamoyl phosphate and aspartate to form carbamoyl aspartate and inorganic phosphate, the committed step in the de novo pyrimidine nucleotide biosynthesis pathway. The protein is Aspartate carbamoyltransferase catalytic subunit of Streptococcus equi subsp. zooepidemicus (strain MGCS10565).